A 696-amino-acid polypeptide reads, in one-letter code: Tensin-4 (696 aa).

Residues 1–14 (MSSSLLAGGHMVSL) form the signal peptide. Disordered regions lie at residues 157 to 246 (LDGP…RAPQ), 271 to 344 (SLPH…CPAS), and 356 to 416 (LING…KDMQ). Positions 192-203 (SSSNESLIFSGN) are enriched in polar residues. Ser230 is modified (phosphoserine). A compositionally biased stretch (low complexity) spans 271–304 (SLPHSSLSSYPSSSRSLGSPASSSSSLHSLDRGS). Polar residues-rich tracts occupy residues 326–344 (QAVQ…CPAS) and 372–397 (PGHQ…SPSK). In terms of domain architecture, SH2 spans 429 to 536 (WFKPSITREQ…ALPCKLTIPQ (108 aa)). The region spanning 563 to 690 (CHTLYLSSVS…QVISLVTALL (128 aa)) is the PTB domain.

Belongs to the PTEN phosphatase protein family. Interacts (via SH2 domain) with Rho GTPase-activating protein DLC1 (via C-terminus); the interaction is independent of DLC1 tyrosine phosphorylation. Interacts with integrin ITGB1; the interaction displaces tensin TNS3 from the ITGB1 cytoplasmic tail and promotes ITGB1 stability. Interacts (via SH2 domain) with E3 ubiquitin-protein ligase CBL (phosphorylated on 'Tyr-780'); the interaction is enhanced in the presence of EGF and reduces interaction of CBL with EGFR. Interacts (via SH2 domain) with receptor tyrosine kinase MET (when phosphorylated); the interaction increases MET protein stability.

Its subcellular location is the cell junction. The protein localises to the focal adhesion. It is found in the cytoplasm. It localises to the cytoskeleton. Its function is as follows. Promotes EGF-induced cell migration by displacing tensin TNS3 from the cytoplasmic tail of integrin ITGB1 which results in dissociation of TNS3 from focal adhesions, disassembly of actin stress fibers and initiation of cell migration. Suppresses ligand-induced degradation of EGFR by reducing EGFR ubiquitination in the presence of EGF. Increases MET protein stability by inhibiting MET endocytosis and subsequent lysosomal degradation which leads to increased cell survival, proliferation and migration. The protein is Tensin-4 (Tns4) of Mus musculus (Mouse).